A 418-amino-acid polypeptide reads, in one-letter code: Ciliary microtubule-associated protein 2 (418 aa).

In terms of tissue distribution, sperm.

This Homo sapiens (Human) protein is Ciliary microtubule-associated protein 2.